Here is a 222-residue protein sequence, read N- to C-terminus: Cytochrome b6 (222 aa).

Residues 39–59 traverse the membrane as a helical segment; it reads IFYCLGGITLVCFIIQFATGF. Cys42 is a binding site for heme c. Heme b is bound by residues His93 and His107. Helical transmembrane passes span 97-117, 123-143, and 193-213; these read ASMM…TGGF, LTWM…VTGY, and LHTF…FLMI. Heme b contacts are provided by His194 and His209.

It belongs to the cytochrome b family. PetB subfamily. The 4 large subunits of the cytochrome b6-f complex are cytochrome b6, subunit IV (17 kDa polypeptide, PetD), cytochrome f and the Rieske protein, while the 4 small subunits are PetG, PetL, PetM and PetN. The complex functions as a dimer. It depends on heme b as a cofactor. The cofactor is heme c.

It is found in the cellular thylakoid membrane. Component of the cytochrome b6-f complex, which mediates electron transfer between photosystem II (PSII) and photosystem I (PSI), cyclic electron flow around PSI, and state transitions. The sequence is that of Cytochrome b6 from Rippkaea orientalis (strain PCC 8801 / RF-1) (Cyanothece sp. (strain PCC 8801)).